A 176-amino-acid polypeptide reads, in one-letter code: MASSSGNDDDLTIPRAAINKMIKETLPNVRVANDARELVVNCCTEFIHLISSEANEICNKSEKKTISPEHVIQALESLGFGSYISEVKEVLQECKTVALKRRKASSRLENLGIPEEELLRQQQELFAKARQQQAELAQQEWLQMQQAAQQAQLAAASASASTQAGSSQDEEDDDDI.

At Ala2 the chain carries N-acetylalanine. Positions 12–75 (TIPRAAINKM…ISPEHVIQAL (64 aa)) constitute a Histone-fold domain. A Nuclear localization signal motif is present at residues 100-103 (KRRK). 4 positions are modified to phosphoserine: Ser105, Ser106, Ser166, and Ser167. Positions 152–167 (QLAAASASASTQAGSS) are enriched in low complexity. The interval 152–176 (QLAAASASASTQAGSSQDEEDDDDI) is disordered.

The protein belongs to the NC2 beta/DR1 family. In terms of assembly, heterodimer with DRAP1. DR1 exists in solution as a homotetramer that dissociates during interaction with TBP and then, after complexing with TBP, reassociates at a slow rate, to reconstitute the tetramer. Interacts with NFIL3. Component of the ADA2A-containing complex (ATAC), composed of KAT14, KAT2A, TADA2L, TADA3L, ZZ3, MBIP, WDR5, YEATS2, CCDC101 and DR1. Post-translationally, phosphorylation regulates its interaction with TBP. Not phosphorylated when bound to DRAP1.

The protein localises to the nucleus. The association of the DR1/DRAP1 heterodimer with TBP results in a functional repression of both activated and basal transcription of class II genes. This interaction precludes the formation of a transcription-competent complex by inhibiting the association of TFIIA and/or TFIIB with TBP. Can bind to DNA on its own. Component of the ATAC complex, a complex with histone acetyltransferase activity on histones H3 and H4. This is Protein Dr1 (Dr1) from Mus musculus (Mouse).